Here is a 500-residue protein sequence, read N- to C-terminus: Probable cytosol aminopeptidase (500 aa).

Residues K268 and D273 each contribute to the Mn(2+) site. K280 is an active-site residue. Mn(2+)-binding residues include D291, D350, and E352. The active site involves R354.

It belongs to the peptidase M17 family. The cofactor is Mn(2+).

The protein resides in the cytoplasm. It carries out the reaction Release of an N-terminal amino acid, Xaa-|-Yaa-, in which Xaa is preferably Leu, but may be other amino acids including Pro although not Arg or Lys, and Yaa may be Pro. Amino acid amides and methyl esters are also readily hydrolyzed, but rates on arylamides are exceedingly low.. It catalyses the reaction Release of an N-terminal amino acid, preferentially leucine, but not glutamic or aspartic acids.. Presumably involved in the processing and regular turnover of intracellular proteins. Catalyzes the removal of unsubstituted N-terminal amino acids from various peptides. This is Probable cytosol aminopeptidase from Alkaliphilus metalliredigens (strain QYMF).